A 180-amino-acid chain; its full sequence is ADP-ribosylation factor 4 (180 aa).

Gly-2 carries N-myristoyl glycine lipidation. GTP is bound by residues 24–31 (GLDAAGKT), 67–71 (DVGGQ), and 126–129 (NKQD).

Belongs to the small GTPase superfamily. Arf family.

It localises to the golgi apparatus. GTP-binding protein involved in protein trafficking; may modulate vesicle budding and uncoating within the Golgi apparatus. May be involved in ciliogenesis. The polypeptide is ADP-ribosylation factor 4 (arf4) (Xenopus laevis (African clawed frog)).